Reading from the N-terminus, the 302-residue chain is Phospho-N-acetylmuramoyl-pentapeptide-transferase (302 aa).

9 helical membrane passes run 1-21, 42-62, 68-88, 123-143, 154-174, 178-198, 204-224, 229-249, and 279-299; these read MIAANFLLNLFLYPILIKLFR, GTPTMGGILFVLTGFLFGMIS, VLLGMFLFFLIGFLDDFLSVV, FFGFTIEMGKWYYLFALLVIV, GLDGLAGWIYVSGSIPYWFFL, GVSEDILLILGAGVLAFLVFN, IFMGDTGSITLGGVLGTVSVL, FYLVLFFLIPVIETLSVILQV, and IVAVFTVFNLISSLVVLEIFG.

It belongs to the glycosyltransferase 4 family. MraY subfamily. Mg(2+) serves as cofactor.

The protein resides in the cell inner membrane. It carries out the reaction UDP-N-acetyl-alpha-D-muramoyl-L-alanyl-gamma-D-glutamyl-meso-2,6-diaminopimeloyl-D-alanyl-D-alanine + di-trans,octa-cis-undecaprenyl phosphate = di-trans,octa-cis-undecaprenyl diphospho-N-acetyl-alpha-D-muramoyl-L-alanyl-D-glutamyl-meso-2,6-diaminopimeloyl-D-alanyl-D-alanine + UMP. The protein operates within cell wall biogenesis; peptidoglycan biosynthesis. Catalyzes the initial step of the lipid cycle reactions in the biosynthesis of the cell wall peptidoglycan: transfers peptidoglycan precursor phospho-MurNAc-pentapeptide from UDP-MurNAc-pentapeptide onto the lipid carrier undecaprenyl phosphate, yielding undecaprenyl-pyrophosphoryl-MurNAc-pentapeptide, known as lipid I. This is Phospho-N-acetylmuramoyl-pentapeptide-transferase from Thermotoga petrophila (strain ATCC BAA-488 / DSM 13995 / JCM 10881 / RKU-1).